A 405-amino-acid chain; its full sequence is Diaminopimelate decarboxylase (405 aa).

At Lys46 the chain carries N6-(pyridoxal phosphate)lysine. Residues Gly225 and 259–262 (EPGR) contribute to the pyridoxal 5'-phosphate site. Residues Arg262, Arg298, and Tyr302 each coordinate substrate. Cys329 functions as the Proton donor in the catalytic mechanism. Substrate-binding residues include Glu330 and Tyr358. Pyridoxal 5'-phosphate is bound at residue Tyr358.

It belongs to the Orn/Lys/Arg decarboxylase class-II family. LysA subfamily. As to quaternary structure, homodimer. Requires pyridoxal 5'-phosphate as cofactor.

The catalysed reaction is meso-2,6-diaminopimelate + H(+) = L-lysine + CO2. Its pathway is amino-acid biosynthesis; L-lysine biosynthesis via DAP pathway; L-lysine from DL-2,6-diaminopimelate: step 1/1. Specifically catalyzes the decarboxylation of meso-diaminopimelate (meso-DAP) to L-lysine. The polypeptide is Diaminopimelate decarboxylase (Helicobacter pylori (Campylobacter pylori)).